A 159-amino-acid chain; its full sequence is Serine-protein kinase RsbW (159 aa).

The protein belongs to the anti-sigma-factor family.

The enzyme catalyses L-seryl-[protein] + ATP = O-phospho-L-seryl-[protein] + ADP + H(+). It carries out the reaction L-threonyl-[protein] + ATP = O-phospho-L-threonyl-[protein] + ADP + H(+). Its function is as follows. Negative regulator of sigma-B activity. Phosphorylates and inactivates its specific antagonist protein, RsbV. Upon phosphorylation of RsbV, RsbW is released and binds to sigma-B, thereby blocking its ability to form an RNA polymerase holoenzyme (E-sigma-B). The sequence is that of Serine-protein kinase RsbW from Staphylococcus epidermidis.